Here is a 380-residue protein sequence, read N- to C-terminus: MSLSDWHLAVKLADQPLTPKSILRLPETELGEYSLGGYSISFLKQLIAGKLQESVPDPELIDLIYCGRKLKDDQTLDFYGIQPGSTVHVLRKSWPEPDQKPEPVDKVAAMREFRVLHTALHSSSSYREAVFKMLSNKESLDQIIVATPGLSSDPIALGVLQDKDLFSVFADPNMLDTLVPAHPALVNAIVLVLHSVAGSAPMPGTDSSSRSMPSSSYRDMPGGFLFEGLSDDEDDFHPNTRSTPSSSTPSSRPASLGYSGAAGPRPITQSELATALALASTPESSSHTPTPGTQGHSSGTSPMSSGVQSGTPITNDLFSQALQHALQASGQPSLQSQWQPQLQQLRDMGIQDDELSLRALQATGGDIQAALELIFAGGAP.

The Ubiquitin-like domain maps to 18-98 (TPKSILRLPE…VLRKSWPEPD (81 aa)). Positions 200-313 (APMPGTDSSS…SSGVQSGTPI (114 aa)) are disordered. Residues 206–221 (DSSSRSMPSSSYRDMP) show a composition bias toward low complexity. Ser-230 is subject to Phosphoserine. Composition is skewed to low complexity over residues 240–253 (TRST…SSRP) and 270–293 (SELA…TPGT). Polar residues predominate over residues 294-313 (QGHSSGTSPMSSGVQSGTPI). The UBA domain occupies 333–377 (SLQSQWQPQLQQLRDMGIQDDELSLRALQATGGDIQAALELIFAG).

In terms of assembly, binds ubiquitin. Interacts with MAVS; this interaction enhances TRIM21-dependent 'Lys-27'-linked polyubiquitination of MAVS. In terms of processing, deubiquitinated by OTUD4 which stabilizes UBL7 expression. Ubiquitous. Highly expressed in heart, skeletal muscle, testis, thyroid and adrenal gland.

Interferon-stimulated protein that positively regulates RNA virus-triggered innate immune signaling. Mechanistically, promotes 'Lys-27'-linked polyubiquitination of MAVS through TRIM21 leading to enhanced the IFN signaling pathway. This Homo sapiens (Human) protein is Ubiquitin-like protein 7 (UBL7).